The primary structure comprises 243 residues: NAD(P)H-quinone oxidoreductase subunit K (243 aa).

Positions 59, 60, 124, and 155 each coordinate [4Fe-4S] cluster.

Belongs to the complex I 20 kDa subunit family. In terms of assembly, NDH-1 can be composed of about 15 different subunits; different subcomplexes with different compositions have been identified which probably have different functions. [4Fe-4S] cluster is required as a cofactor.

It is found in the cellular thylakoid membrane. The catalysed reaction is a plastoquinone + NADH + (n+1) H(+)(in) = a plastoquinol + NAD(+) + n H(+)(out). It catalyses the reaction a plastoquinone + NADPH + (n+1) H(+)(in) = a plastoquinol + NADP(+) + n H(+)(out). Its function is as follows. NDH-1 shuttles electrons from an unknown electron donor, via FMN and iron-sulfur (Fe-S) centers, to quinones in the respiratory and/or the photosynthetic chain. The immediate electron acceptor for the enzyme in this species is believed to be plastoquinone. Couples the redox reaction to proton translocation, and thus conserves the redox energy in a proton gradient. Cyanobacterial NDH-1 also plays a role in inorganic carbon-concentration. The chain is NAD(P)H-quinone oxidoreductase subunit K from Picosynechococcus sp. (strain ATCC 27264 / PCC 7002 / PR-6) (Agmenellum quadruplicatum).